Here is a 449-residue protein sequence, read N- to C-terminus: 8-oxoguanine deaminase (449 aa).

Zn(2+)-binding residues include His64 and His66. Gln69 serves as a coordination point for substrate. Zn(2+) is bound at residue His232. Glu235 and His269 together coordinate substrate. The Zn(2+) site is built by His269 and Asp320.

This sequence belongs to the metallo-dependent hydrolases superfamily. ATZ/TRZ family. As to quaternary structure, homodimer. Zn(2+) serves as cofactor.

The catalysed reaction is 8-oxoguanine + H2O + H(+) = urate + NH4(+). The protein operates within purine metabolism. In terms of biological role, specifically deaminates 8-Oxoguanine (8-oxoG) to uric acid. 8-oxoG is formed via the oxidation of guanine within DNA by reactive oxygen species and leads, if uncorrected, to the incorporation of 8-oxoG:A mismatches and eventually to G:C to T:A transversions. The sequence is that of 8-oxoguanine deaminase from Pseudomonas aeruginosa (strain ATCC 15692 / DSM 22644 / CIP 104116 / JCM 14847 / LMG 12228 / 1C / PRS 101 / PAO1).